We begin with the raw amino-acid sequence, 152 residues long: uncharacterized protein (152 aa).

This is an uncharacterized protein from Methanocaldococcus jannaschii (strain ATCC 43067 / DSM 2661 / JAL-1 / JCM 10045 / NBRC 100440) (Methanococcus jannaschii).